Reading from the N-terminus, the 94-residue chain is MTICDTVDQYTIMSGDRLKIKDLLCNRLTECGWRNEVRLLCRNILLEKSANNSVSVDQLISEVTPKARTLVPDAVKKELLMKIRTILAETDEDN.

This sequence belongs to the ENY2 family. Component of the nuclear pore complex (NPC)-associated AMEX complex (anchoring and mRNA export complex), composed of at least e(y)2 and xmas-2. Component of the SAGA transcription coactivator-HAT complexes, at least composed of Ada2b, e(y)2, Pcaf/Gcn5, Taf10 and Nipped-A/Trrap. Within the SAGA complex, e(y)2, Sgf11, and not/nonstop form an additional subcomplex of SAGA called the DUB module (deubiquitination module). Component of the THO complex, composed of at least e(y)2, HPR1, THO2, THOC5, THOC6 and THOC7. Interacts with e(y)1. Interacts with su(Hw) (via zinc fingers). Interacts with xmas-2; required for localization to the nuclear periphery. Interacts with the nuclear pore complex (NPC).

Its subcellular location is the nucleus. It localises to the nucleoplasm. It is found in the cytoplasm. Its function is as follows. Involved in mRNA export coupled transcription activation by association with both the AMEX and the SAGA complexes. The SAGA complex is a multiprotein complex that activates transcription by remodeling chromatin and mediating histone acetylation and deubiquitination. Within the SAGA complex, participates in a subcomplex that specifically deubiquitinates histone H2B. The SAGA complex is recruited to specific gene promoters by activators, where it is required for transcription. Required for nuclear receptor-mediated transactivation. Involved in transcription elongation by recruiting the THO complex onto nascent mRNA. The AMEX complex functions in docking export-competent ribonucleoprotein particles (mRNPs) to the nuclear entrance of the nuclear pore complex (nuclear basket). AMEX participates in mRNA export and accurate chromatin positioning in the nucleus by tethering genes to the nuclear periphery. The sequence is that of Enhancer of yellow 2 transcription factor from Drosophila grimshawi (Hawaiian fruit fly).